Consider the following 349-residue polypeptide: 5-deoxyribose 1-phosphate isomerase (349 aa).

Substrate is bound by residues 49-51, R92, and Q199; that span reads RGA. D240 acts as the Proton donor in catalysis. 250–251 serves as a coordination point for substrate; it reads NK.

The protein belongs to the EIF-2B alpha/beta/delta subunits family. DrdI subfamily.

The catalysed reaction is 5-deoxy-alpha-D-ribose 1-phosphate = 5-deoxy-D-ribulose 1-phosphate. It functions in the pathway carbohydrate degradation. In terms of biological role, catalyzes the isomerization of 5-deoxy-alpha-D-ribose 1-phosphate to 5-deoxy-D-ribulose 1-phosphate, as part of a 5-deoxyribose salvage pathway that recycles this toxic radical SAM enzyme by-product to mainstream metabolites. This chain is 5-deoxyribose 1-phosphate isomerase, found in Clostridium botulinum (strain 657 / Type Ba4).